We begin with the raw amino-acid sequence, 908 residues long: Zinc finger CCCH domain-containing protein 41 (908 aa).

Residues 1-13 (MELSVSSPKQSVL) are compositionally biased toward polar residues. Residues 1 to 124 (MELSVSSPKQ…GRGNYGSWAQ (124 aa)) are disordered. Residues 20 to 34 (SDPEEEHEISEEEDD) show a composition bias toward acidic residues. Polar residues-rich tracts occupy residues 48–59 (SQSLEQDSSDQA) and 90–105 (GQRV…SNPM). The C3H1-type zinc-finger motif lies at 200 to 228 (GIPRQRCRDFEERGFCLRGDMCPMEHGMN). A disordered region spans residues 333 to 375 (NVAPLDDSNQDAAENGCGIRDSRSTSQSVWGRMKGSNSQANSK). The segment covering 356–373 (STSQSVWGRMKGSNSQAN) has biased composition (polar residues). The region spanning 438–510 (RTLFVNYVPH…RFIKLWWANR (73 aa)) is the RRM domain. Disordered stretches follow at residues 558 to 590 (PTFQ…LQQK), 629 to 695 (VVKR…KQRP), and 807 to 908 (RESN…QIHQ). Over residues 559 to 588 (TFQTGGAPSSSEQPKPVVVTTSGPKVTPLQ) the composition is skewed to polar residues. Residues 587–630 (LQQKKADTLERLKETLRKKQEMLEQKRNEYRKKLATLEKQGTVV) adopt a coiled-coil conformation. Residues 630–647 (VKREEADEPDAKRVKLDT) are compositionally biased toward basic and acidic residues. Serine 657 carries the phosphoserine modification. Polar residues predominate over residues 677–688 (AKLSTETPSPDS). A compositionally biased stretch (low complexity) spans 807 to 828 (RESNNNNNNSNSLSVSRDNLSS). Positions 846–863 (KTSSTEEPENTNVSGDND) are enriched in polar residues. The segment covering 865-886 (TLDKQETKESDNDNNKSNHESI) has biased composition (basic and acidic residues). Residues 898 to 908 (TDEEQSEQIHQ) show a composition bias toward acidic residues.

The polypeptide is Zinc finger CCCH domain-containing protein 41 (Arabidopsis thaliana (Mouse-ear cress)).